A 1081-amino-acid chain; its full sequence is MYFDKDNSMSPRPLLPSDEQKLNINLLTKKEKFSHLDPHYDAKATPQRSTSNRNVGDLLLEKRTAKPMIQKALTNTDNFIEMYHNQQRKNLDDDTIKEVMINDENGKTVASTNDGRYDNDYDNNDINDQKTLDNIAGSPHMEKNRNKVKIEHDSSSQKPIAKESSKAQKNIIKKGIKDFKFGSVIGDGAYSTVMLATSIDTKKRYAAKVLNKEYLIRQKKVKYVSIEKTALQKLNNSPSVVRLFSTFQDESSLYFLLEYAPNGDFLSLMKKYGSLDETCARYYAAQIIDAIDYLHSNGIIHRDIKPENILLDGEMKIKLTDFGTAKLLNPTNNSVSKPEYDLSTRSKSFVGTAEYVSPELLNDSFTDYRCDIWAFGCILFQMIAGKPPFKATNEYLTFQKVMKVQYAFTPGFPLIIRDLVKKILVKNLDRRLTISQIKEHHFFKDLNFKDGSVWSKTPPEIKPYKINAKSMQAMPSGSDRKLVKKSVNTLGKSHLVTQRSASSPSVEETTHSTLYNNNTHASTESEISIKKRPTDERTAQILENARKGINNRKNQPGKRTPSGAASAALAASAALTKKTMQSYPTSSSKSSRSSSPATTSRPGTYKRTSSTESKPFAKSPPLSASVLSSKVPMPPYTPPMSPPMTPYDTYQMTPPYTTKQQDYSDTAIAAPKPCISKQNVKNSTDSPLMNKQDIQWSFYLKNINEHVLRTEKLDFVTTNYDILEKKMLKLNGSLLDPQLFGKPRHTFLSQVARSGGEVTGFRNDPTMTAYSKTEDTYYSKNIIDLQLLEDDYRIEGGDLSELLTNRSGEGYKCNQNSSPMKDDDKSESNNKGSSVFSGKIKKLFHPTSAAETLSSSDEKTKYYKRTIVMTSFGRFLVFAKRRQPNPVTNLKYELEYDINLRQQGTKIKELIIPLEMGTNHIVVIQTPYKSFLLSTDKKTTSKLFTVLKKILNSNTNKIEKELLQRNQKVIERRTSSSGRAIPKDLPTSKSPSPKPRTHSQSPSISKHNSFSESINSAKSNRSSRIFETFINAKEQNSKKHAAPVPLTSKLVNGLPKRQVTVGLGLNTGTNFKNSSAKSKRS.

At serine 138 the chain carries Phosphoserine. Residues 179 to 443 (FKFGSVIGDG…ISQIKEHHFF (265 aa)) form the Protein kinase domain. ATP is bound by residues 189-191 (AYS) and lysine 208. Residues 210–255 (LNKEYLIRQKKVKYVSIEKTALQKLNNSPSVVRLFSTFQDESSLYF) form a PIF-pocket region. Residues 258–260 (EYA) and aspartate 264 contribute to the ATP site. Catalysis depends on aspartate 303, which acts as the Proton acceptor. Residues glutamate 307 and aspartate 321 each contribute to the ATP site. The segment covering 494–526 (HLVTQRSASSPSVEETTHSTLYNNNTHASTESE) has biased composition (polar residues). Disordered stretches follow at residues 494 to 652 (HLVT…TYQM), 805 to 833 (NRSGEGYKCNQNSSPMKDDDKSESNNKGS), and 970 to 1017 (IERR…INSA). The segment covering 527-538 (ISIKKRPTDERT) has biased composition (basic and acidic residues). 2 stretches are compositionally biased toward low complexity: residues 564 to 575 (AASAALAASAAL) and 582 to 602 (SYPTSSSKSSRSSSPATTSRP). Phosphoserine is present on serine 619. Positions 632–645 (PMPPYTPPMSPPMT) are enriched in pro residues. Composition is skewed to polar residues over residues 805–819 (NRSGEGYKCNQNSSP) and 998–1017 (HSQSPSISKHNSFSESINSA). Serine 1009 carries the phosphoserine modification.

It belongs to the protein kinase superfamily. AGC Ser/Thr protein kinase family. PDPK1 subfamily.

It is found in the nucleus. Its subcellular location is the cytoplasm. The protein localises to the cell cortex. It carries out the reaction L-seryl-[protein] + ATP = O-phospho-L-seryl-[protein] + ADP + H(+). The enzyme catalyses L-threonyl-[protein] + ATP = O-phospho-L-threonyl-[protein] + ADP + H(+). Sphingoid base activates kinase activity. Its function is as follows. Serine/threonine-protein kinase which is part sphingolipid-mediated signaling pathway that is required for the internalization step of endocytosis by regulating eisosome assembly and organization, and modulating the organization of the plasma membrane. Phosphorylates and activates PKC1. Activates YPK1 and YPK2, 2 components of signaling cascade required for maintenance of cell wall integrity. Required for stress-induced P-body assembly and regulates global mRNA decay at the deadenylation step. In Saccharomyces cerevisiae (strain ATCC 204508 / S288c) (Baker's yeast), this protein is Serine/threonine-protein kinase PKH2 (PKH2).